A 610-amino-acid chain; its full sequence is UvrABC system protein C (610 aa).

Residues G19 to I97 enclose the GIY-YIG domain. Positions E207–V242 constitute a UVR domain.

The protein belongs to the UvrC family. Interacts with UvrB in an incision complex.

It localises to the cytoplasm. Its function is as follows. The UvrABC repair system catalyzes the recognition and processing of DNA lesions. UvrC both incises the 5' and 3' sides of the lesion. The N-terminal half is responsible for the 3' incision and the C-terminal half is responsible for the 5' incision. The chain is UvrABC system protein C from Methylococcus capsulatus (strain ATCC 33009 / NCIMB 11132 / Bath).